The primary structure comprises 320 residues: Phospho-N-acetylmuramoyl-pentapeptide-transferase (320 aa).

Transmembrane regions (helical) follow at residues 5–25 (FWAFTRAFIVTVIFMPAVIKF), 51–71 (MGGALFIAAASLSALIGSVAY), 75–95 (IGFVMVLIPILAVVAYAIIGG), 121–141 (LCAVVIMIIMWIMQIPLILNI), 143–163 (FIGVFNLGIFYFIFLWFWLVG), 176–196 (GLLTGTSLIVYLVYTWIALGV), 198–218 (NHIIVIFNASIIGALVGFLLF), 241–261 (IESIVLGIPFSLLWFGLIFVI), and 300–320 (IDALFWIVTAIIGIIGILYMS).

The protein belongs to the glycosyltransferase 4 family. MraY subfamily. It depends on Mg(2+) as a cofactor.

Its subcellular location is the cell membrane. It carries out the reaction UDP-N-acetyl-alpha-D-muramoyl-L-alanyl-gamma-D-glutamyl-L-lysyl-D-alanyl-D-alanine + di-trans,octa-cis-undecaprenyl phosphate = Mur2Ac(oyl-L-Ala-gamma-D-Glu-L-Lys-D-Ala-D-Ala)-di-trans,octa-cis-undecaprenyl diphosphate + UMP. The protein operates within cell wall biogenesis; peptidoglycan biosynthesis. In terms of biological role, catalyzes the initial step of the lipid cycle reactions in the biosynthesis of the cell wall peptidoglycan: transfers peptidoglycan precursor phospho-MurNAc-pentapeptide from UDP-MurNAc-pentapeptide onto the lipid carrier undecaprenyl phosphate, yielding undecaprenyl-pyrophosphoryl-MurNAc-pentapeptide, known as lipid I. The chain is Phospho-N-acetylmuramoyl-pentapeptide-transferase from Leuconostoc mesenteroides subsp. mesenteroides (strain ATCC 8293 / DSM 20343 / BCRC 11652 / CCM 1803 / JCM 6124 / NCDO 523 / NBRC 100496 / NCIMB 8023 / NCTC 12954 / NRRL B-1118 / 37Y).